Consider the following 1224-residue polypeptide: Tyrosine-protein kinase abl-1 (1224 aa).

An SH3 domain is found at 115–188 (SSAPLFVALY…PSNFIAPYNS (74 aa)). In terms of domain architecture, SH2 spans 194–284 (WYHGKISRSD…GLICLLMYPA (91 aa)). Residues 311 to 562 (IIMHNKLGGG…PRFRDIHFNL (252 aa)) enclose the Protein kinase domain. Residues 317-325 (LGGGQYGDV), lysine 340, and 385-391 (EFMCNGN) each bind ATP. Aspartate 432 functions as the Proton acceptor in the catalytic mechanism. A Kinase activation loop motif is present at residues 450-474 (DFGLARFMKEDTYTAHAGAKFPIKW). Residues 579–620 (LKKNNDKKLESDKRRSNVRERSDSKSRHSSHHDRDRDRESLH) are compositionally biased toward basic and acidic residues. Disordered stretches follow at residues 579 to 671 (LKKN…NTKP), 736 to 775 (KEST…STYV), 796 to 881 (KRSE…DVGM), 914 to 937 (LRHV…ATDN), and 968 to 1016 (RPFS…RSNG). Polar residues-rich tracts occupy residues 639–655 (SVSF…TSFR) and 746–760 (AGSS…NDSL). Basic and acidic residues-rich tracts occupy residues 797–819 (RSET…KSEK) and 864–877 (PDSK…ETTK). The span at 973–984 (QCPNNSTSSAIS) shows a compositional bias: polar residues. The span at 1001–1016 (YEERMKPELPRKRSNG) shows a compositional bias: basic and acidic residues.

Belongs to the protein kinase superfamily. Tyr protein kinase family. ABL subfamily. As to quaternary structure, interacts (via SH2 and SH3 domains) with mig-13; the interaction is direct. May interact with soem-1.

Its subcellular location is the cell membrane. It localises to the cytoplasm. It catalyses the reaction L-tyrosyl-[protein] + ATP = O-phospho-L-tyrosyl-[protein] + ADP + H(+). In terms of biological role, functions downstream of migratory protein mig-13 and is involved in Q neuroblast migration during larval development. Recruited by mig-13 to the leading edge of Q neuroblasts and their descendents to signal downstream, likely to the wve-1 pathway, and direct migration along the anteroposterior body axis. Promotes germline cell apoptosis in response to oxidative, osmotic and heat shock stresses. This Caenorhabditis elegans protein is Tyrosine-protein kinase abl-1 (abl-1).